Reading from the N-terminus, the 753-residue chain is MQRRQSSKHSKRPLQVHHSNQTDLSAWRKGGTVDTEKSAQNRQSLSDQKNDNEQDSLEQALSYFEKIQDRVSLKKSEVLQKHLSTMESIALKRGLPPEGFDVLLDVALSGKLADTVNTRLLKSLIPASAIPESSIVSSVSWFCVSKCSSNIQLLFLRWLITMFDFIDHKEQVHALYGIFFSFLNDEKLCPYICHVLYLLTRKENVKPFRVRRLLDLQSKMGMQPHLQALLSLYKLFCPELVSITLPQKMKTYFKNADGPWKAAINAVRQRNQANSTVPQPLLLGTAQPHSRKRKWNTQLIVPASSANAQNLVVGGKMSRADSYSANESFPVEQLRTFPQLLQNIHRLEFPSQMGSVLTNPLLLHYMNCSKDESVYLRLYYWMGQTLQEECTWCVVDNNQYEEEFRGFLETVYKAECFLQEGFPSCEEFLYRSLPLWDGVSCRSQILQLVSWIPLSTFSEMKSQLCDPLAQLFFTSSLYFKCSVLESLKELLQNWLNWHVVQLDSESDSQFSSLNTTLSGLVNGVAELINFVGRISTAALHLEKSHTFLLYFILDFYETVCDIYLKYKLPLLIMPPAGVFYPALLSMDSVNLNQLCYIMYRYRTNLIAAKENEMSKKKIQQFKFSSQTYQEYNQYIIAMVGCLWTSSAFQKDNHPEGIRLDDELLKKTGVREYKNSFNIVYHPALMCYAVDFLQQAWPDDTTFNFNLIKGKKWNWYLRYLYGQGLEGLKLFIESSINRVSKASQSKAEDEDEKV.

The segment covering 1 to 15 has biased composition (basic residues); sequence MQRRQSSKHSKRPLQ. A disordered region spans residues 1–54; the sequence is MQRRQSSKHSKRPLQVHHSNQTDLSAWRKGGTVDTEKSAQNRQSLSDQKNDNEQ.

It belongs to the CENP-I/CTF3 family. As to quaternary structure, component of the CENPA-HI complex, at least composed of CENPH, CENPI, CENPK, CENPL, CENPM, CENPO and CENPP.

It is found in the nucleus. Its subcellular location is the chromosome. The protein resides in the centromere. Functionally, component of the CENPA-HI complex, a centromeric complex involved in assembly of kinetochore proteins, mitotic progression and chromosome segregation. Required for the localization of CENPC but not CENPA to the centromere. It however may be involved in incorporation of newly synthesized CENPA into centromeres via its interaction with the CENPA-NAC complex. The chain is Centromere protein I (CENPI) from Gallus gallus (Chicken).